Consider the following 245-residue polypeptide: Farnesol dehydrogenase (245 aa).

NAD(+) contacts are provided by residues 11 to 40 (VTGA…ARRV) and D64. Substrate is bound at residue S145. The active-site Proton acceptor is Y160. Residue K164 coordinates NAD(+).

Belongs to the short-chain dehydrogenases/reductases (SDR) family. Homodimer. As to expression, highly expressed level in the midgut and brain in adult females, and at lower level in the abdominal and thoracic ganglia. High levels are detected in corpora allata (CA), Malpighian tubules and fat body.

The enzyme catalyses (2E,6E)-farnesol + NADP(+) = (2E,6E)-farnesal + NADPH + H(+). Mediates oxidation of farnesol into farnesal, a precursor of juvenile hormone in the corpora allata (CA), the glands that synthesize juvenile hormone. Able to oxidize C(10) to C(15) isoprenoid and aliphatic alcohols. This Aedes aegypti (Yellowfever mosquito) protein is Farnesol dehydrogenase.